Reading from the N-terminus, the 171-residue chain is Peptide methionine sulfoxide reductase MsrA (171 aa).

C13 is an active-site residue.

Belongs to the MsrA Met sulfoxide reductase family.

It catalyses the reaction L-methionyl-[protein] + [thioredoxin]-disulfide + H2O = L-methionyl-(S)-S-oxide-[protein] + [thioredoxin]-dithiol. It carries out the reaction [thioredoxin]-disulfide + L-methionine + H2O = L-methionine (S)-S-oxide + [thioredoxin]-dithiol. Functionally, has an important function as a repair enzyme for proteins that have been inactivated by oxidation. Catalyzes the reversible oxidation-reduction of methionine sulfoxide in proteins to methionine. The chain is Peptide methionine sulfoxide reductase MsrA from Mycobacterium sp. (strain JLS).